A 72-amino-acid polypeptide reads, in one-letter code: DNA-directed RNA polymerase subunit omega (72 aa).

It belongs to the RNA polymerase subunit omega family. In terms of assembly, the RNAP catalytic core consists of 2 alpha, 1 beta, 1 beta' and 1 omega subunit. When a sigma factor is associated with the core the holoenzyme is formed, which can initiate transcription.

It carries out the reaction RNA(n) + a ribonucleoside 5'-triphosphate = RNA(n+1) + diphosphate. Promotes RNA polymerase assembly. Latches the N- and C-terminal regions of the beta' subunit thereby facilitating its interaction with the beta and alpha subunits. This is DNA-directed RNA polymerase subunit omega from Clostridium botulinum (strain Loch Maree / Type A3).